We begin with the raw amino-acid sequence, 771 residues long: MAVAHNLGFPRIGADRELKKALEAYWKGELDEQGLRQVGRQLRARHWQAQLDAGIELLPVGDFAWYDQVLSHSLMFGVIPQRFRPAEGQATLDTLFAMARGVARSCCGGAQAQEMTKWFDTNYHYLVPEFSVDQQFQLSWTQLFEEVEEAKALGHAIKPVLIGPLSYLWLGKLKGEADQTQTFDKLELLDRLLPVYGEVLDRLAAQGVEWVQIDEPILALDLPQDWKNAFERAYNLLQRAPLKKLVATYFGGLEDNLGLAATLPVDGLHIDLVRAPEQYPVILDRLPAYKVLSLGLVNGRNVWRCDLDKALEVARHAAERLGERLWLAPSCSLLHSPVDLEREDRLDEEVKSWLAFAVQKCSEVATLARAIDDPQDAEVQAALARSRAVQAARAQSPRIHKPAVQARLAAIEAKDSRRTSVFATRIELQRARLQLPAFPTTTIGSFPQTPAIRLARQAYKQGRLSLGDYTEAMQAEIRHAVAVQEQIGLDVLVHGEAERNDMVEYFAEQLEGYVFTRFGWVQSYGSRCVKPAIIYGDLSRPRPMTVDWIRYAQQQTDRIMKGMLTGPVTMLMWSFAREDVPREVQARQLALAIRDEVCDLEAAGIRIIQIDEAAFREGLPLRREQWRHYLDWAVEAFRLCASGVRDETQIHTHMCYSEFNDVIESIAAMDADVITIETSRSQMELLEAFRAFDYPNDIGPGVYDIHSPRVPDTAEMVQLLEKAAECIPAERLWVNPDCGLKTRGWPETEAALVNMVAAARQLRAARSAKVA.

Residues 16–19 (RELK) and K117 contribute to the 5-methyltetrahydropteroyltri-L-glutamate site. L-homocysteine is bound by residues 443–445 (IGS) and E496. L-methionine-binding positions include 443–445 (IGS) and E496. 5-methyltetrahydropteroyltri-L-glutamate is bound by residues 527–528 (RC) and W573. D611 is a binding site for L-homocysteine. Residue D611 participates in L-methionine binding. E617 serves as a coordination point for 5-methyltetrahydropteroyltri-L-glutamate. Residues H653, C655, and E677 each contribute to the Zn(2+) site. H706 serves as the catalytic Proton donor. C738 contacts Zn(2+).

This sequence belongs to the vitamin-B12 independent methionine synthase family. Requires Zn(2+) as cofactor.

The catalysed reaction is 5-methyltetrahydropteroyltri-L-glutamate + L-homocysteine = tetrahydropteroyltri-L-glutamate + L-methionine. It functions in the pathway amino-acid biosynthesis; L-methionine biosynthesis via de novo pathway; L-methionine from L-homocysteine (MetE route): step 1/1. Functionally, catalyzes the transfer of a methyl group from 5-methyltetrahydrofolate to homocysteine resulting in methionine formation. The sequence is that of 5-methyltetrahydropteroyltriglutamate--homocysteine methyltransferase from Stutzerimonas stutzeri (strain A1501) (Pseudomonas stutzeri).